Here is a 146-residue protein sequence, read N- to C-terminus: Large ribosomal subunit protein uL13 (146 aa).

The protein belongs to the universal ribosomal protein uL13 family. In terms of assembly, part of the 50S ribosomal subunit.

Its function is as follows. This protein is one of the early assembly proteins of the 50S ribosomal subunit, although it is not seen to bind rRNA by itself. It is important during the early stages of 50S assembly. The protein is Large ribosomal subunit protein uL13 of Borreliella burgdorferi (strain ATCC 35210 / DSM 4680 / CIP 102532 / B31) (Borrelia burgdorferi).